The following is a 149-amino-acid chain: Large ribosomal subunit protein bL9 (149 aa).

It belongs to the bacterial ribosomal protein bL9 family.

Functionally, binds to the 23S rRNA. The protein is Large ribosomal subunit protein bL9 of Helicobacter pylori (strain P12).